Here is a 265-residue protein sequence, read N- to C-terminus: Seminal vesicle secretory protein 3A (265 aa).

Positions 1–20 (MKSIFFSLSLLLLLEKKAAG) are cleaved as a signal peptide. 5 tandem repeats follow at residues 116 to 119 (QIKS), 122 to 125 (QVKS), 129 to 132 (QLKS), 136 to 139 (QLKT), and 142 to 145 (QVKS). Positions 116–145 (QIKSQTQVKSYAAQLKSQPGQLKTIGQVKS) are 5 X 4 AA tandem repeats of Q-X-K-[ST].

Post-translationally, glycosylated. In terms of processing, covalently cross-linked by transglutaminase, which is important for the formation of the gelatinous copulatory plug. Five repeats of Q-X-K-(S/T) in the central region of the protein serve as the transglutaminase substrate site(s). In terms of tissue distribution, highly expressed in the seminal vesicle where it is detected in luminal epithelium of the mucosa folds, and also in luminal fluid (at protein level). Not detected in other tissues tested.

Its subcellular location is the secreted. In terms of biological role, component of the copulatory plug. The chain is Seminal vesicle secretory protein 3A from Mus musculus (Mouse).